We begin with the raw amino-acid sequence, 96 residues long: uncharacterized protein (96 aa).

In terms of biological role, essential for virus function. This is an uncharacterized protein from Saccharolobus solfataricus (Sulfolobus solfataricus).